Reading from the N-terminus, the 2362-residue chain is Filaggrin-2 (2362 aa).

Positions 1 to 81 (MAYLLRSVVT…TEFILMIFKL (81 aa)) are S-100-like. 2 consecutive EF-hand domains span residues 8-43 (VVTIIDVFYKYTKQDEECGTLSKDELKELLEKEFRP) and 49-84 (DDPDTVDVIMHMLDRDHDRRLDFTEFILMIFKLALA). Residues Asp62, Asp64, Asp66, Arg68, and Glu73 each coordinate Ca(2+). Disordered stretches follow at residues 96–238 (ASGS…GLSC) and 284–2109 (GCCR…SSIP). The segment covering 111–120 (EESETEEEEE) has biased composition (acidic residues). 2 stretches are compositionally biased toward basic and acidic residues: residues 159–174 (KRLERQDELSSSEESR) and 189–214 (NKEKDGSRSEELGEKGDKSYDSPSRE). Filaggrin repeat units lie at residues 261–308 (GYNT…NQSC) and 373–414 (HSSC…SNGF). Polar residues-rich tracts occupy residues 284 to 317 (GCCRPKNASSSCQASRSQGQGNQSCRTQSNCQSG), 342 to 375 (SCSQSSSQRGYGSKQCGQPQNCGRQQRMGSSHSS), and 383 to 395 (GATQSSGCGQQRM). Over residues 396 to 411 (SSCGHSSSSHQKGCSS) the composition is skewed to low complexity. Polar residues-rich tracts occupy residues 421 to 443 (ASGSGHSSCCEQHGTNSSQSSGF) and 450 to 469 (SGQSCCGQHGTASSQSSGYS). 3 stretches are compositionally biased toward low complexity: residues 474-519 (GSGQ…QSSG), 539-550 (GSRQSSGSEQHG), and 567-580 (SQSSSSGHHGSGSQ). The Filaggrin 3 repeat unit spans residues 555–607 (QSSGSGKHETGPSQSSSSGHHGSGSQQHGGGSGQSTGFGEHESSSGHSSSSGQ). Positions 581-590 (QHGGGSGQST) are enriched in gly residues. Residues 599-618 (SGHSSSSGQHRSGSRHSSGS) are compositionally biased toward low complexity. The segment covering 632–653 (GHHGSGSQQHGGGSGNSTGFGE) has biased composition (gly residues). A compositionally biased stretch (low complexity) spans 654-675 (HGSSSHPLPSSGQNESSSGQSS). One copy of the Filaggrin 4 repeat lies at 672–723 (GQSSRSERHGTGSGQSSGFGQHGSGSHQSSSSGHNEYGSGQTSSSWPHGKGS). The segment covering 682-694 (TGSGQSSGFGQHG) has biased composition (gly residues). 3 stretches are compositionally biased toward low complexity: residues 695 to 705 (SGSHQSSSSGH), 728 to 754 (GYGEQESGHGQSSSSWQHGTGPGQSSS), and 780 to 798 (GYGEQEAGHGQSSSSWQHG). Gly residues predominate over residues 826–838 (TGSGQSLGFGQHG). Low complexity predominate over residues 846 to 864 (SSGHYESVSEPSSSSWQHG). The Filaggrin 5 repeat unit spans residues 880-927 (HGQSSSAWNHGNESGQSNGYGEHESGHGQSSSAWNHGNESGQSNGFGE). Composition is skewed to polar residues over residues 886–896 (AWNHGNESGQS) and 912–925 (AWNHGNESGQSNGF). The segment covering 973 to 982 (ESSEGEEHSV) has biased composition (basic and acidic residues). A Filaggrin 6 repeat occupies 984–1035 (PRRYSGYGHGQGQAGHQQRESGYGQRGRPQGPSQDSSRQPQAGHGQPSQSGY). The segment covering 1014–1035 (GPSQDSSRQPQAGHGQPSQSGY) has biased composition (polar residues). The segment covering 1047–1059 (EYSEGEAHSEVSQ) has biased composition (basic and acidic residues). The span at 1067–1077 (CHCHCHGQARH) shows a compositional bias: basic residues. Low complexity predominate over residues 1104 to 1121 (GPGQPSQSGSRRSPRSQP). Gly residues predominate over residues 1142-1152 (SGHGHGQGQGQ). Residues 1162–1174 (HGQQGRPQGPSQD) are compositionally biased toward polar residues. The stretch at 1165–1210 (QGRPQGPSQDSSRQPQAGQGQPSQSGSGRSPRRSPVHPESSEGEEH) is one Filaggrin 7 repeat. A compositionally biased stretch (low complexity) spans 1175-1193 (SSRQPQAGQGQPSQSGSGR). A phosphoserine mark is found at Ser1198, Ser1204, and Ser1205. Residues 1220–1232 (SGHGHGQGQGQGQ) are compositionally biased toward gly residues. Residues 1255–1273 (SSRQPQAGQGQPSQSGSGR) show a composition bias toward low complexity. Phosphoserine is present on residues Ser1278, Ser1284, and Ser1285. A Filaggrin 8 repeat occupies 1280–1334 (VHPESSEGEEHSVVPQRHSGSGHGHGQGQGQAGHQQRESVHGQPVRPEVPTQDSS). Positions 1300–1310 (SGHGHGQGQGQ) are enriched in gly residues. Residues 1333 to 1351 (SSRQPQAGQGQPSQSGSGR) show a composition bias toward low complexity. 3 positions are modified to phosphoserine: Ser1356, Ser1362, and Ser1363. Residues 1377–1396 (ESCHCHCHDQAGHQQRESVH) are compositionally biased toward basic and acidic residues. Residues 1413–1436 (PQAGPGQPSQSGSRRSPRSSPVHP) show a composition bias toward low complexity. Phosphoserine is present on residues Ser1438 and Ser1439. Residues 1454-1464 (SGHGHGQGQGQ) show a composition bias toward gly residues. The stretch at 1474-1522 (HGQRGRPQGPTQDSSRQPQAGQGQPSQSGSGRSPRRSPVHPESSEGEEH) is one Filaggrin 9 repeat. Over residues 1487 to 1505 (SSRQPQAGQGQPSQSGSGR) the composition is skewed to low complexity. Ser1510, Ser1516, and Ser1517 each carry phosphoserine. The segment covering 1532–1544 (SGHGHGHGQGQGQ) has biased composition (gly residues). Low complexity predominate over residues 1567 to 1585 (SSRQPQAGQGQPSQSGSGR). Phosphoserine is present on residues Ser1590, Ser1596, and Ser1597. Low complexity-rich tracts occupy residues 1643-1661 (SSRQPQAGQGQPSQSGSGR) and 1683-1696 (QRHSGSGHSHGQGQ). Over residues 1698-1708 (HAEHQQRESVH) the composition is skewed to basic and acidic residues. A Filaggrin 10 repeat occupies 1723-1756 (RQPQAGQGQPSLSGSGRSPRRSPVHPESSEGEEH). Over residues 1724–1739 (QPQAGQGQPSLSGSGR) the composition is skewed to low complexity. Residues Ser1744, Ser1750, Ser1751, Ser1824, Ser1830, and Ser1831 each carry the phosphoserine modification. Residues 1801–1825 (SSRQPQAGQGQPSQSGSGRSPGRSP) are compositionally biased toward low complexity. Residues 1829–1848 (ESSEGEEHSVVPQRHSESGH) are compositionally biased toward basic and acidic residues. Residues 1879–1897 (SSRQPQAGQGQPSQSGSGR) are compositionally biased toward low complexity. Phosphoserine is present on residues Ser1902, Ser1908, and Ser1909. Positions 1924-1934 (SGHGHGQGQGQ) are enriched in gly residues. Positions 1949-1975 (RPQGPSQDSSSQPQASQGQPSQSGSGR) are enriched in low complexity. 3 positions are modified to phosphoserine: Ser1980, Ser1986, and Ser1987. Gly residues predominate over residues 2002-2012 (SGHGHGQGQGQ). A Filaggrin 11 repeat occupies 2016–2070 (QQRESLHGQRGRSQSPFHPSHSIHWQSKCTISKKSSRLSGHYGRNHFQSTISGNQ). Polar residues-rich tracts occupy residues 2026-2048 (GRSQSPFHPSHSIHWQSKCTISK), 2061-2079 (HFQSTISGNQYDSSQSSRH), and 2100-2109 (LRSNSQSSIP). At Ser2104 the chain carries Phosphoserine. One copy of the Filaggrin 12 repeat lies at 2218-2259 (DDSQYILFQKHLESPSFGNQSGFSPNERQLYTCNESIDSYHL).

The protein belongs to the S100-fused protein family. In the N-terminal section; belongs to the S-100 family. Deiminated by PADI1, PADI2 or PADI3 in vitro. The deiminated form is degraded by calpain-1/CAPN1 more quickly and into shorter peptides than the intact protein. In terms of processing, may be processed by calpain-1/CAPN1.

The protein resides in the cytoplasm. It is found in the cytoplasmic granule. Functionally, essential for normal cell-cell adhesion in the cornified cell layers. Important for proper integrity and mechanical strength of the stratum corneum of the epidermis. The sequence is that of Filaggrin-2 (Flg2) from Mus musculus (Mouse).